A 946-amino-acid chain; its full sequence is Probable inactive ATP-dependent zinc metalloprotease FTSHI 1, chloroplastic (946 aa).

Residues 1–54 (MASIDNVFSLGTRFSIPENPKRSILKHATTSSFSARTQTRWRAPILRRSFTVLC) constitute a chloroplast transit peptide. Helical transmembrane passes span 289–309 (AVIA…VFAV), 320–340 (VVWP…LGVL), and 369–389 (VASS…MVLL). 470 to 477 (GPPGCGKT) is an ATP binding site.

In the N-terminal section; belongs to the AAA ATPase family. This sequence in the C-terminal section; belongs to the peptidase M41 family. Oligomer.

It is found in the plastid. It localises to the chloroplast inner membrane. Functionally, functions in chloroplast biogenesis and chloroplast division. Required for plastid development during embryogenesis. Might be involved in chaperone functions or play a structural role in the thylakoid FtsH complex. This is Probable inactive ATP-dependent zinc metalloprotease FTSHI 1, chloroplastic from Arabidopsis thaliana (Mouse-ear cress).